Consider the following 208-residue polypeptide: Thymidylate kinase (208 aa).

10–17 (GGEGAGKS) is an ATP binding site.

The protein belongs to the thymidylate kinase family.

It carries out the reaction dTMP + ATP = dTDP + ADP. Its function is as follows. Phosphorylation of dTMP to form dTDP in both de novo and salvage pathways of dTTP synthesis. The polypeptide is Thymidylate kinase (Alcanivorax borkumensis (strain ATCC 700651 / DSM 11573 / NCIMB 13689 / SK2)).